Here is a 468-residue protein sequence, read N- to C-terminus: Interleukin-9 receptor (468 aa).

The first 37 residues, 1–37, serve as a signal peptide directing secretion; the sequence is MALGRCIAEGWTLERVAVKQVSWFLIYSWVCSGVCRG. Residues 38–270 are Extracellular-facing; that stretch reads VSVPEQGGGG…GLLVPRWQWS (233 aa). 2 N-linked (GlcNAc...) asparagine glycosylation sites follow: N116 and N155. Positions 148–256 constitute a Fibronectin type-III domain; it reads PPSDLQSNVS…WSQPVSFPSP (109 aa). Positions 244-248 match the WSXWS motif motif; the sequence is WSEWS. The chain crosses the membrane as a helical span at residues 271-291; the sequence is ASILVVVPIFLLLTGFVHLLF. The Cytoplasmic portion of the chain corresponds to 292 to 468; sequence KLSPRLKRIF…PVALPVSSRA (177 aa). The Box 1 motif motif lies at 301-309; the sequence is FYQNIPSPE. A disordered region spans residues 407–426; that stretch reads PQEDWAPLGSARPPPPDSDS.

This sequence belongs to the type I cytokine receptor family. Type 4 subfamily. In terms of assembly, interacts with IL9.

It localises to the cell membrane. The protein resides in the secreted. In terms of biological role, plays an important role in the immune response against parasites by acting as a receptor of IL9. This chain is Interleukin-9 receptor (Il9r), found in Mus musculus (Mouse).